We begin with the raw amino-acid sequence, 339 residues long: Uroporphyrinogen decarboxylase (339 aa).

Substrate-binding positions include 21–25 (RQAGR), phenylalanine 40, aspartate 71, tyrosine 147, serine 202, and histidine 315.

This sequence belongs to the uroporphyrinogen decarboxylase family. As to quaternary structure, homodimer.

It localises to the cytoplasm. The catalysed reaction is uroporphyrinogen III + 4 H(+) = coproporphyrinogen III + 4 CO2. It participates in porphyrin-containing compound metabolism; protoporphyrin-IX biosynthesis; coproporphyrinogen-III from 5-aminolevulinate: step 4/4. In terms of biological role, catalyzes the decarboxylation of four acetate groups of uroporphyrinogen-III to yield coproporphyrinogen-III. This Helicobacter pylori (strain J99 / ATCC 700824) (Campylobacter pylori J99) protein is Uroporphyrinogen decarboxylase.